An 83-amino-acid polypeptide reads, in one-letter code: U25-theraphotoxin-Cg1a (83 aa).

The first 23 residues, Met1–Ala23, serve as a signal peptide directing secretion. A propeptide spanning residues Gln24–Arg48 is cleaved from the precursor. 3 cysteine pairs are disulfide-bonded: Cys50/Cys66, Cys57/Cys71, and Cys65/Cys81.

It belongs to the neurotoxin 07 (Beta/delta-agtx) family. 03 (aga-4) subfamily. JZTX sub-subfamily. In terms of tissue distribution, expressed by the venom gland.

It is found in the secreted. Its function is as follows. Inhibits TTX-sensitive sodium currents in rat dorsal root ganglion (DRG) neurons. In Chilobrachys guangxiensis (Chinese earth tiger tarantula), this protein is U25-theraphotoxin-Cg1a.